A 685-amino-acid polypeptide reads, in one-letter code: MAAASRSASGWALLLLVALWQQRAAGSGVFQLQLQEFINERGVLASGRPCEPGCRTFFRVCLKHFQAVVSPGPCTFGTVSTPVLGTNSFAVRDDSSGGGRNPLQLPFNFTWPGTFSLIIEAWHAPGDDLRPEALPPDALISKIAIQGSLAVGQNWLLDEQTSTLTRLRYSYRVICSDNYYGDNCSRLCKKRNDHFGHYVCQPDGNLSCLPGWTGEYCQQPICLSGCHEQNGYCSKPAECLCRPGWQGRLCNECIPHNGCRHGTCSTPWQCTCDEGWGGLFCDQDLNYCTHHSPCKNGATCSNSGQRSYTCTCRPGYTGVDCELELSECDSNPCRNGGSCKDQEDGYHCLCPPGYYGLHCEHSTLSCADSPCFNGGSCRERNQGANYACECPPNFTGSNCEKKVDRCTSNPCANGGQCLNRGPSRMCRCRPGFTGTYCELHVSDCARNPCAHGGTCHDLENGLMCTCPAGFSGRRCEVRTSIDACASSPCFNRATCYTDLSTDTFVCNCPYGFVGSRCEFPVGLPPSFPWVAVSLGVGLAVLLVLLGMVAVAVRQLRLRRPDDGSREAMNNLSDFQKDNLIPAAQLKNTNQKKELEVDCGLDKSNCGKQQNHTLDYNLAPGPLGRGTMPGKFPHSDKSLGEKAPLRLHSEKPECRISAICSPRDSMYQSVCLISEERNECVIATEV.

The signal sequence occupies residues 1 to 26 (MAAASRSASGWALLLLVALWQQRAAG). The Extracellular portion of the chain corresponds to 27–529 (SGVFQLQLQE…PVGLPPSFPW (503 aa)). Disulfide bonds link cysteine 50-cysteine 54 and cysteine 61-cysteine 74. N-linked (GlcNAc...) asparagine glycans are attached at residues asparagine 108 and asparagine 183. The 45-residue stretch at 173–217 (VICSDNYYGDNCSRLCKKRNDHFGHYVCQPDGNLSCLPGWTGEYC) folds into the DSL domain. Cysteine 175 and cysteine 184 are disulfide-bonded. 2 interaction with Notch1 regions span residues 185-187 (SRL) and 191-195 (RNDHF). Cysteine 188 and cysteine 200 are joined by a disulfide. Residue asparagine 205 is glycosylated (N-linked (GlcNAc...) asparagine). Intrachain disulfides connect cysteine 208–cysteine 217, cysteine 222–cysteine 233, cysteine 226–cysteine 239, cysteine 241–cysteine 250, cysteine 253–cysteine 264, cysteine 259–cysteine 270, cysteine 272–cysteine 281, cysteine 288–cysteine 300, cysteine 294–cysteine 310, cysteine 312–cysteine 321, cysteine 328–cysteine 339, cysteine 333–cysteine 348, cysteine 350–cysteine 359, cysteine 366–cysteine 377, cysteine 371–cysteine 388, cysteine 390–cysteine 399, cysteine 406–cysteine 417, cysteine 411–cysteine 426, cysteine 428–cysteine 437, cysteine 444–cysteine 455, cysteine 449–cysteine 464, cysteine 466–cysteine 475, cysteine 484–cysteine 495, cysteine 489–cysteine 506, and cysteine 508–cysteine 517. 8 EGF-like domains span residues 218–251 (QQPI…RLCN), 252–282 (ECIP…LFCD), 284–322 (DLNY…VDCE), 324–360 (ELSE…LHCE), 362–400 (STLS…SNCE), 402–438 (KVDR…TYCE), 440–476 (HVSD…RRCE), and 480–518 (SIDA…SRCE). N-linked (GlcNAc...) asparagine glycosylation occurs at asparagine 393. The helical transmembrane segment at 530 to 550 (VAVSLGVGLAVLLVLLGMVAV) threads the bilayer. At 551–685 (AVRQLRLRRP…RNECVIATEV (135 aa)) the chain is on the cytoplasmic side.

As to quaternary structure, interacts with NOTCH4. Interacts (via N-terminal DSL and MNNL domains) with NOTCH1 (via EGF-like domains). As to expression, expressed in vascular endothelium.

It localises to the cell membrane. Its function is as follows. Involved in the Notch signaling pathway as Notch ligand. Activates NOTCH1 and NOTCH4. Involved in angiogenesis; negatively regulates endothelial cell proliferation and migration and angiogenic sprouting. Essential for retinal progenitor proliferation. Required for suppressing rod fates in late retinal progenitors as well as for proper generation of other retinal cell types. During spinal cord neurogenesis, inhibits V2a interneuron fate. This Homo sapiens (Human) protein is Delta-like protein 4 (DLL4).